The following is a 257-amino-acid chain: Snake venom serine protease 2C (257 aa).

Positions 1-18 are cleaved as a signal peptide; sequence MVLIRVLANLLILQLSYA. Residues 19–24 constitute a propeptide that is removed on maturation; the sequence is QKSSEL. In terms of domain architecture, Peptidase S1 spans 25 to 248; that stretch reads VIGGHPCNIN…HLDWIKSIIA (224 aa). 6 cysteine pairs are disulfide-bonded: Cys-31/Cys-162, Cys-49/Cys-65, Cys-97/Cys-255, Cys-141/Cys-209, Cys-173/Cys-188, and Cys-199/Cys-224. Residues His-64 and Asp-109 each act as charge relay system in the active site. N-linked (GlcNAc...) asparagine glycosylation is found at Asn-116, Asn-120, and Asn-121. Ser-203 serves as the catalytic Charge relay system.

The protein belongs to the peptidase S1 family. Snake venom subfamily. As to quaternary structure, monomer. As to expression, expressed by the venom gland.

The protein resides in the secreted. Its function is as follows. Snake venom serine protease that may act in the hemostasis system of the prey. In Craspedocephalus gramineus (Bamboo pit viper), this protein is Snake venom serine protease 2C (TLG2C).